The chain runs to 573 residues: N(2)-(2-carboxyethyl)arginine synthase (573 aa).

Tyr-271 and Asp-301 together coordinate substrate. 410–413 lines the thiamine diphosphate pocket; sequence IGFF. 414-415 contacts substrate; sequence RH. 436–438 is a thiamine diphosphate binding site; sequence SSF. Asp-463 provides a ligand contact to Mg(2+). Thiamine diphosphate contacts are provided by residues 464–465, 490–495, and Tyr-561; these read GG and NDTNGL. Positions 490 and 492 each coordinate Mg(2+). Leu-571 contacts substrate.

In terms of assembly, homotetramer; dimer of dimers. Mg(2+) is required as a cofactor. The cofactor is thiamine diphosphate.

It catalyses the reaction D-glyceraldehyde 3-phosphate + L-arginine = N(2)-(2-carboxyethyl)-L-arginine + phosphate + H(+). In terms of biological role, involved in the biosynthesis of the beta-lactamase inhibitor, clavulanic acid. Catalyzes the thiamine diphosphate (ThDP) dependent condensation of D-glyceraldehyde-3-phosphate (D-G3P) with L-arginine to yield the beta-amino acid, N2-(2-carboxyethyl)arginine (CEA) via a beta-elimination resulting in the formation of an enol which undergoes a second elimination to generate the alpha,beta-unsaturated acryloyl-ThDP. The protein is N(2)-(2-carboxyethyl)arginine synthase of Streptomyces clavuligerus.